The sequence spans 325 residues: Treponemal membrane protein B (325 aa).

A signal peptide spans 1-24; it reads MKTRNFSLVSALYVLLGVPLFVSA. One copy of the EAARKAAE repeat lies at 159–166; the sequence is EAARKAAE. Residues 167 to 189 form an ARKLEEQRIAAQKAQEERKRAEE repeat; the sequence is ARKLEEQRIAAQKAQEERKRAEE. The tract at residues 176 to 224 is disordered; that stretch reads AAQKAQEERKRAEEEAARKAAEARKLEEQRIAAQKAQEERKRAEEEAAR. An EAARKAAE repeat occupies 190–197; it reads EAARKAAE. The ARKLEEQRIAAQKAQEERKRAEE repeat unit spans residues 198 to 220; it reads ARKLEEQRIAAQKAQEERKRAEE. An EAARKAAE repeat occupies 221–228; it reads EAARKAAE. Residues 229–236 form an EAARKAEE repeat; it reads EAARKAEE.

This sequence to T.phagedenis TmpB.

The protein localises to the cell outer membrane. Functionally, tmp may serve as a porin or transport protein for large molecules. The polypeptide is Treponemal membrane protein B (tmpB) (Treponema pallidum (strain Nichols)).